Consider the following 152-residue polypeptide: Superoxide dismutase [Cu-Zn] 4A (152 aa).

Positions 45, 47, and 62 each coordinate Cu cation. A disulfide bridge connects residues cysteine 56 and cysteine 145. Residues histidine 62, histidine 70, histidine 79, and aspartate 82 each coordinate Zn(2+). Histidine 119 contacts Cu cation.

It belongs to the Cu-Zn superoxide dismutase family. Homodimer. It depends on Cu cation as a cofactor. Zn(2+) is required as a cofactor.

The protein localises to the cytoplasm. The catalysed reaction is 2 superoxide + 2 H(+) = H2O2 + O2. Functionally, destroys radicals which are normally produced within the cells and which are toxic to biological systems. This is Superoxide dismutase [Cu-Zn] 4A (SODCC.3) from Zea mays (Maize).